A 470-amino-acid chain; its full sequence is Aminoacyl transferase sphA (470 aa).

Ser-212, His-244, and Thr-272 together coordinate pyridoxal 5'-phosphate. Residue Lys-275 is modified to N6-(pyridoxal phosphate)lysine.

It belongs to the class-II pyridoxal-phosphate-dependent aminotransferase family. BioF subfamily. As to quaternary structure, homodimer. It depends on pyridoxal 5'-phosphate as a cofactor.

It participates in secondary metabolite biosynthesis. Aminoacyl transferase; part of the gene cluster that mediates the biosynthesis of sphingofungins, bioactive molecules acting as sphingolipid inhibitors via inhibiting serine palmitoyl transferase (SPT). Within the pathway, sphA transfers 2-methyl-aminomalonate and 2-hydroxymethyl-aminomalonate onto the sphB product 3-hydroxyoctadeca-4,10-dienoyl-ACP to produce the precursors of sphingofungins E and F. The substrate specificity of sphA using 2-methyl-aminomalonate and 2-hydroxymethyl-aminomalonate instread of aminomalonate is responsible for the biosynthesis of sphingofungins E and F but not B and C like in Aspergillus fumigatus. The PKS sphB does not contain any putative thioesterase domain for releasing the nascent polyketide chain and it has been suggested that aminoacyl transferases can facilitate the polyketide chain release. This is Aminoacyl transferase sphA from Byssochlamys spectabilis (Paecilomyces variotii).